Here is a 68-residue protein sequence, read N- to C-terminus: Protein transport protein Sec61 subunit gamma (68 aa).

M1 carries the N-acetylmethionine modification. At 1 to 32 the chain is on the cytoplasmic side; that stretch reads MDQVMQFVEPSRQFVKDSIRLVKRCTKPDRKE. Residue S18 is modified to Phosphoserine. A helical transmembrane segment spans residues 33–61; that stretch reads FQKIAMATAIGFAIMGFIGFFVKLIHIPI. Residues 62-68 are Extracellular-facing; sequence NNIIVGG.

Belongs to the SecE/SEC61-gamma family. The SEC61 channel-forming translocon complex consists of channel-forming core components SEC61A1, SEC61B and SEC61G and different auxiliary components such as SEC62 and SEC63. The SEC61 channel associates with the multi-pass translocon (MPT) complex.

It is found in the endoplasmic reticulum membrane. Its function is as follows. Component of SEC61 channel-forming translocon complex that mediates transport of signal peptide-containing precursor polypeptides across the endoplasmic reticulum (ER). Forms a ribosome receptor and a gated pore in the ER membrane, both functions required for cotranslational translocation of nascent polypeptides. The SEC61 channel is also involved in ER membrane insertion of transmembrane proteins: it mediates membrane insertion of the first few transmembrane segments of proteins, while insertion of subsequent transmembrane regions of multi-pass membrane proteins is mediated by the multi-pass translocon (MPT) complex. The SEC61 channel cooperates with the translocating protein TRAM1 to import nascent proteins into the ER. The sequence is that of Protein transport protein Sec61 subunit gamma (SEC61G) from Bos taurus (Bovine).